The primary structure comprises 262 residues: Adenosylcobinamide-GDP ribazoletransferase (262 aa).

Helical transmembrane passes span 37 to 57 (SMPLAGAAIGALAAGTYALCS), 58 to 78 (MFSFGTPLFLALFLLWLGIWL), 112 to 132 (VGAFAVLSLACLLSFRWLFLY), 139 to 159 (IPPALFVAIPLLSRSGAAWLL), 183 to 203 (AVWALVLAFLALSLLLVFGGV), 205 to 225 (VWTSAALAVAMALLALGAKPW), and 237 to 257 (VLGALIEGGETLLWGVVWLLH).

The protein belongs to the CobS family. It depends on Mg(2+) as a cofactor.

It localises to the cell membrane. It carries out the reaction alpha-ribazole + adenosylcob(III)inamide-GDP = adenosylcob(III)alamin + GMP + H(+). It catalyses the reaction alpha-ribazole 5'-phosphate + adenosylcob(III)inamide-GDP = adenosylcob(III)alamin 5'-phosphate + GMP + H(+). It functions in the pathway cofactor biosynthesis; adenosylcobalamin biosynthesis; adenosylcobalamin from cob(II)yrinate a,c-diamide: step 7/7. Functionally, joins adenosylcobinamide-GDP and alpha-ribazole to generate adenosylcobalamin (Ado-cobalamin). Also synthesizes adenosylcobalamin 5'-phosphate from adenosylcobinamide-GDP and alpha-ribazole 5'-phosphate. The chain is Adenosylcobinamide-GDP ribazoletransferase from Geobacillus thermodenitrificans (strain NG80-2).